The primary structure comprises 278 residues: Probable endonuclease 4 (278 aa).

Zn(2+) contacts are provided by His67, His107, Glu141, Asp173, His176, His210, Asp223, His225, and Glu255.

Belongs to the AP endonuclease 2 family. It depends on Zn(2+) as a cofactor.

It carries out the reaction Endonucleolytic cleavage to 5'-phosphooligonucleotide end-products.. Its function is as follows. Endonuclease IV plays a role in DNA repair. It cleaves phosphodiester bonds at apurinic or apyrimidinic (AP) sites, generating a 3'-hydroxyl group and a 5'-terminal sugar phosphate. The chain is Probable endonuclease 4 from Natronomonas pharaonis (strain ATCC 35678 / DSM 2160 / CIP 103997 / JCM 8858 / NBRC 14720 / NCIMB 2260 / Gabara) (Halobacterium pharaonis).